The following is a 447-amino-acid chain: Protein CLT1, chloroplastic (447 aa).

The N-terminal 48 residues, 1–48, are a transit peptide targeting the chloroplast; that stretch reads MATTSSDRLIAGLTASIGSIESRYANPAQSVSLICRNQINGAPPIVLR. 10 helical membrane passes run 103-123, 135-155, 172-192, 200-220, 228-248, 256-276, 304-324, 351-371, 387-407, and 413-433; these read MEIV…RVLY, FFLA…ILYF, LPFL…MAAA, TTVL…IFLG, ILGC…GSGA, GILW…DTVM, IFQV…WGIP, GAPL…ISLL, TVSV…LGVA, and GFVA…WTPS.

It belongs to the CRT-like transporter family.

The protein resides in the plastid. The protein localises to the chloroplast membrane. In terms of biological role, involved in thiol transport from the plastid to the cytosol. Transports probably both glutathione (GSH) and its precursor, gamma-glutamylcysteine (gamma-EC). Exhibits some functional redundancy with CLT3 in maintaining the root GSH pool. This chain is Protein CLT1, chloroplastic, found in Arabidopsis thaliana (Mouse-ear cress).